We begin with the raw amino-acid sequence, 177 residues long: ATP synthase subunit delta (177 aa).

This sequence belongs to the ATPase delta chain family. In terms of assembly, F-type ATPases have 2 components, F(1) - the catalytic core - and F(0) - the membrane proton channel. F(1) has five subunits: alpha(3), beta(3), gamma(1), delta(1), epsilon(1). F(0) has three main subunits: a(1), b(2) and c(10-14). The alpha and beta chains form an alternating ring which encloses part of the gamma chain. F(1) is attached to F(0) by a central stalk formed by the gamma and epsilon chains, while a peripheral stalk is formed by the delta and b chains.

It localises to the cell inner membrane. Its function is as follows. F(1)F(0) ATP synthase produces ATP from ADP in the presence of a proton or sodium gradient. F-type ATPases consist of two structural domains, F(1) containing the extramembraneous catalytic core and F(0) containing the membrane proton channel, linked together by a central stalk and a peripheral stalk. During catalysis, ATP synthesis in the catalytic domain of F(1) is coupled via a rotary mechanism of the central stalk subunits to proton translocation. This protein is part of the stalk that links CF(0) to CF(1). It either transmits conformational changes from CF(0) to CF(1) or is implicated in proton conduction. The polypeptide is ATP synthase subunit delta (Sulfurimonas denitrificans (strain ATCC 33889 / DSM 1251) (Thiomicrospira denitrificans (strain ATCC 33889 / DSM 1251))).